Here is a 249-residue protein sequence, read N- to C-terminus: Bacillaene synthase decarboxylase PksI (249 aa).

Histidine 230 is a catalytic residue.

Belongs to the enoyl-CoA hydratase/isomerase family. As to quaternary structure, homotrimer. Does not form a heterotrimeric complex with PksH.

Its subcellular location is the cytoplasm. It functions in the pathway antibiotic biosynthesis; bacillaene biosynthesis. Functionally, involved in some intermediate steps for the synthesis of the antibiotic polyketide bacillaene which is involved in secondary metabolism. Catalyzes the decarboxylation of the 3-methylglutaconyl group tethered to PksL to a 3-methylcrotonyl moiety. The polypeptide is Bacillaene synthase decarboxylase PksI (pksI) (Bacillus subtilis (strain 168)).